Reading from the N-terminus, the 538-residue chain is MSLISPLAAVLSAMAIVLGLLFFPNMTPQPTLHPRVGWRKEKASTLRAALRSCYKLNDWALEGYNAYAKLNIPYVLPSFDRGPITIIPARLMRRLYTLPDTDLDIRMTQQETNQTRWVAWDKKPAEDTFVWDVLRKQITRNLRQLTPIVASEIELSFNRWWGTDKEWKSIDIWDSCWKIVTGGINTTLCGSPLCRDAEFLQSCQNHSLVLVAGAMAINGAPRLLQPIIGGLVWFVCAILFNTTMKRSKAVVQERLEKTAMLRAEPAYDWKPPQDAIQWIIDDLYASDNLTQLNVKTICFRLLLLNDVSIPSTSFSVQTLLLNLFAADPALGFLEALREECQTVYTESGGVWTYDALKKLKITESAIRESLRLSPVGGIGLHRTVVNPKGISLPDYRLNLPHGTVIASPIESIHYDDDIYPHANDYNAFRFADPEAVRAILDKLSSEPNSNISTGGPRDRESKSAASTANIDEAFLAFGIGKHICPGRFFVMVEMKLILAIILVHYDVKPVKFKPKLVDCLWLKVPWNSGTLVVRRRSN.

Residues 3-23 form a helical membrane-spanning segment; it reads LISPLAAVLSAMAIVLGLLFF. Cysteine 484 contributes to the heme binding site.

The protein belongs to the cytochrome P450 family. Heme is required as a cofactor.

It is found in the membrane. It catalyses the reaction 12-deshydroxyl okaramine E + 2 reduced [NADPH--hemoprotein reductase] + 2 O2 = 3-desmethyl okaramine B + 2 oxidized [NADPH--hemoprotein reductase] + 2 H2O + 2 H(+). It functions in the pathway alkaloid biosynthesis. Nonribosomal peptide synthetase; part of the gene cluster that mediates the biosynthesis of okaramine B, a prenylated indole alkaloid that possesses an unusual octacyclic ring system, including a four-membered azetidine ring and an eight-membered azocine ring, and that exhibits insecticidal activity against silkworm larvae. Within the pathway, okaG acts as a 2,3-diol synthase that installs 2,3-diol on the okaramine scaffold to convert 12-deshydroxyl okaramine E into 3-desmethyl okaramine B. OkaG is also able to produce use okaramine E and produce okaramine D with the help of the methyltransferase okaF. The biosynthesis begins with the NRPS okaA that condenses two tryptophan molecules into cyclo(L-Trp-L-Trp). Prenylation by the prenyltransferase okaC then leads to the formation of cyclo(N8-(alpha,alpha-dimethylallyl)-L-Trp-6a-(alpha,alpha-dime-thylallyl)-L-Trp). This is followed by indole 2,3-epoxidation by the FAD-dependent monooxygenase okaB to facilitate the formation of the hexahydropyrrolo[2,3-b]indole (HPI) moiety of okaramine C. The cytochrome P450 monooxygenase okaD then likely catalyzes formation of the eight-membered ring of okaramine A. The dioxygenase okaE further forms the unusual 2-dimethyl-3-methyl-azetidine ring to yield 12-deshydroxyl okaramine E, as well as the hydroxylation of 12-deshydroxyl okaramine E to produce okaramine E. The cytochrome P450 monoxygenase okaG converts 12-deshydroxyl okaramine E into 3-desmethyl okaramine B which is further methylated by the methyltransferase okaF into okaramine B. In a shunt pathway, okaG and okaF together are also able to convert okaramine E into okaramine D. Okaramine H is produced by nonenzymatic conversion from okaramine A. In Penicillium ochrochloron, this protein is Cytochrome P450 monooxygenase okaG.